We begin with the raw amino-acid sequence, 230 residues long: Demethylmenaquinone methyltransferase (230 aa).

S-adenosyl-L-methionine-binding positions include threonine 62, aspartate 80, 100–101, and serine 117; that span reads DA.

It belongs to the class I-like SAM-binding methyltransferase superfamily. MenG/UbiE family.

The enzyme catalyses a 2-demethylmenaquinol + S-adenosyl-L-methionine = a menaquinol + S-adenosyl-L-homocysteine + H(+). Its pathway is quinol/quinone metabolism; menaquinone biosynthesis; menaquinol from 1,4-dihydroxy-2-naphthoate: step 2/2. Methyltransferase required for the conversion of demethylmenaquinol (DMKH2) to menaquinol (MKH2). This chain is Demethylmenaquinone methyltransferase, found in Mycolicibacterium paratuberculosis (strain ATCC BAA-968 / K-10) (Mycobacterium paratuberculosis).